Here is a 113-residue protein sequence, read N- to C-terminus: Integration host factor subunit alpha (113 aa).

The segment at 59 to 80 is disordered; it reads GNFQVRDKPPRPGRNPKTGETI.

Belongs to the bacterial histone-like protein family. As to quaternary structure, heterodimer of an alpha and a beta chain.

Its function is as follows. This protein is one of the two subunits of integration host factor, a specific DNA-binding protein that functions in genetic recombination as well as in transcriptional and translational control. The sequence is that of Integration host factor subunit alpha from Bordetella bronchiseptica (strain ATCC BAA-588 / NCTC 13252 / RB50) (Alcaligenes bronchisepticus).